A 197-amino-acid chain; its full sequence is Gene 49 protein (197 aa).

2 disordered regions span residues 1–49 and 114–157; these read MRGN…EVRP and FANL…RFCK. The segment covering 117 to 135 has biased composition (gly residues); sequence LGGGSKPNSGGGGSGGGGQ. The span at 136-146 shows a compositional bias: low complexity; the sequence is QHQSRAPQQAQ.

This chain is Gene 49 protein (49), found in Mycobacterium phage D29 (Mycobacteriophage D29).